The following is a 486-amino-acid chain: Cytosol aminopeptidase (486 aa).

Residues lysine 249 and aspartate 254 each contribute to the Zn(2+) site. Lysine 261 is a catalytic residue. The Zn(2+) site is built by aspartate 272, aspartate 331, and glutamate 333. Arginine 335 is an active-site residue.

Belongs to the peptidase M17 family. Homohexamer. Zn(2+) serves as cofactor.

Its subcellular location is the cytoplasm. The catalysed reaction is Release of an N-terminal amino acid, Xaa-|-Yaa-, in which Xaa is preferably Leu, but may be other amino acids including Pro although not Arg or Lys, and Yaa may be Pro. Amino acid amides and methyl esters are also readily hydrolyzed, but rates on arylamides are exceedingly low.. It catalyses the reaction Release of N-terminal proline from a peptide.. In terms of biological role, presumably involved in the processing and regular turnover of intracellular proteins. Catalyzes the removal of unsubstituted N-terminal amino acids from various peptides. In Encephalitozoon cuniculi (strain GB-M1) (Microsporidian parasite), this protein is Cytosol aminopeptidase.